Reading from the N-terminus, the 595-residue chain is Pentatricopeptide repeat-containing protein At4g21065 (595 aa).

PPR repeat units lie at residues 84-118 (NVFI…GLVE), 120-154 (DTHT…GFGS), 155-185 (LIYV…MPEK), 186-220 (DLVA…GIKP), 221-255 (DGFT…GLTR), 256-290 (NLHS…NSVS), 291-317 (WTSL…MEST), 323-353 (CEIT…MREE), and 359-389 (RIEH…MPMQ). Residues 394–469 (IWRTLLGACT…VPGHSLVEVG (76 aa)) are type E motif. A type E(+) motif region spans residues 470 to 500 (NRVHEFLMGDKSHPQSDAIYAKLKEMTGRLR). Residues 501–595 (SEGYVPQISN…NGSCSCQDYW (95 aa)) form a type DYW motif region.

Belongs to the PPR family. PCMP-H subfamily.

The polypeptide is Pentatricopeptide repeat-containing protein At4g21065 (PCMP-H28) (Arabidopsis thaliana (Mouse-ear cress)).